The chain runs to 303 residues: Glutathione transport system permease protein GsiD (303 aa).

Transmembrane regions (helical) follow at residues 40–60 (AMTA…ARWI), 105–125 (LAAG…LGLL), 144–164 (LFAF…GSGI), 165–185 (ANVI…LVRG), 222–242 (IVVF…SLSF), and 266–286 (VIAP…VLAF). The ABC transmembrane type-1 domain occupies 101–290 (AQISLAAGVF…LTVLAFNLLG (190 aa)).

Belongs to the binding-protein-dependent transport system permease family. In terms of assembly, the complex is composed of two ATP-binding proteins (GsiA), two transmembrane proteins (GsiC and GsiD) and a solute-binding protein (GsiB).

Its subcellular location is the cell inner membrane. Its function is as follows. Part of the ABC transporter complex GsiABCD involved in glutathione import. Probably responsible for the translocation of the substrate across the membrane. In Escherichia coli O6:K15:H31 (strain 536 / UPEC), this protein is Glutathione transport system permease protein GsiD.